The chain runs to 335 residues: N-acetylglucosaminyl-phosphatidylinositol de-N-acetylase (335 aa).

A helical membrane pass occupies residues Ser3–Leu23. N-linked (GlcNAc...) asparagine glycans are attached at residues Asn128 and Asn153.

This sequence belongs to the PIGL family.

It is found in the endoplasmic reticulum membrane. The enzyme catalyses a 6-(N-acetyl-alpha-D-glucosaminyl)-1-(1,2-diacyl-sn-glycero-3-phospho)-1D-myo-inositol + H2O = a 6-(alpha-D-glucosaminyl)-1-(1,2-diacyl-sn-glycero-3-phospho)-1D-myo-inositol + acetate. The protein operates within glycolipid biosynthesis; glycosylphosphatidylinositol-anchor biosynthesis. Functionally, involved in the second step of GPI biosynthesis. De-N-acetylation of N-acetylglucosaminyl-phosphatidylinositol. This Arthroderma benhamiae (strain ATCC MYA-4681 / CBS 112371) (Trichophyton mentagrophytes) protein is N-acetylglucosaminyl-phosphatidylinositol de-N-acetylase.